The sequence spans 468 residues: Ribulose bisphosphate carboxylase large chain (468 aa).

An N6,N6,N6-trimethyllysine modification is found at Lys-4. Substrate is bound by residues Asn-113 and Thr-163. Lys-165 acts as the Proton acceptor in catalysis. Position 167 (Lys-167) interacts with substrate. Lys-191, Asp-193, and Glu-194 together coordinate Mg(2+). Residue Lys-191 is modified to N6-carboxylysine. The Proton acceptor role is filled by His-284. Substrate is bound by residues Arg-285, His-317, and Ser-369.

It belongs to the RuBisCO large chain family. Type I subfamily. As to quaternary structure, heterohexadecamer of 8 large chains and 8 small chains; disulfide-linked. The disulfide link is formed within the large subunit homodimers. Mg(2+) serves as cofactor. The disulfide bond which can form in the large chain dimeric partners within the hexadecamer appears to be associated with oxidative stress and protein turnover.

Its subcellular location is the plastid. It is found in the chloroplast. The enzyme catalyses 2 (2R)-3-phosphoglycerate + 2 H(+) = D-ribulose 1,5-bisphosphate + CO2 + H2O. It carries out the reaction D-ribulose 1,5-bisphosphate + O2 = 2-phosphoglycolate + (2R)-3-phosphoglycerate + 2 H(+). In terms of biological role, ruBisCO catalyzes two reactions: the carboxylation of D-ribulose 1,5-bisphosphate, the primary event in carbon dioxide fixation, as well as the oxidative fragmentation of the pentose substrate in the photorespiration process. Both reactions occur simultaneously and in competition at the same active site. This Pandorea jasminoides (Bower vine) protein is Ribulose bisphosphate carboxylase large chain.